The sequence spans 521 residues: Serine/threonine-protein kinase A (521 aa).

The 275-residue stretch at 15 to 289 folds into the Protein kinase domain; it reads YQLVELVGSG…DVIIRAIDAI (275 aa). ATP-binding positions include 21–29 and Lys45; that span reads VGSGAMGQV. The active-site Proton acceptor is the Asp148.

Belongs to the protein kinase superfamily. Ser/Thr protein kinase family. In terms of processing, autophosphorylated.

It catalyses the reaction L-seryl-[protein] + ATP = O-phospho-L-seryl-[protein] + ADP + H(+). The catalysed reaction is L-threonyl-[protein] + ATP = O-phospho-L-threonyl-[protein] + ADP + H(+). Functionally, protein kinase that regulates cellular motility via phosphorylation of membrane proteins. The sequence is that of Serine/threonine-protein kinase A (spkA) from Synechocystis sp. (strain ATCC 27184 / PCC 6803 / Kazusa).